The sequence spans 323 residues: Tetraacyldisaccharide 4'-kinase (323 aa).

56–63 provides a ligand contact to ATP; that stretch reads TVGGVGKT.

This sequence belongs to the LpxK family.

It catalyses the reaction a lipid A disaccharide + ATP = a lipid IVA + ADP + H(+). Its pathway is glycolipid biosynthesis; lipid IV(A) biosynthesis; lipid IV(A) from (3R)-3-hydroxytetradecanoyl-[acyl-carrier-protein] and UDP-N-acetyl-alpha-D-glucosamine: step 6/6. Transfers the gamma-phosphate of ATP to the 4'-position of a tetraacyldisaccharide 1-phosphate intermediate (termed DS-1-P) to form tetraacyldisaccharide 1,4'-bis-phosphate (lipid IVA). This is Tetraacyldisaccharide 4'-kinase from Legionella pneumophila (strain Lens).